We begin with the raw amino-acid sequence, 300 residues long: Jacalin-related lectin 33 (300 aa).

The disordered stretch occupies residues 1–20; sequence MAQKVEAGGGAGGASWDDGV. Alanine 2 carries the post-translational modification N-acetylalanine. Jacalin-type lectin domains lie at 2–146 and 154–297; these read AQKV…YFAT and AKKL…HVMP.

Belongs to the jacalin lectin family. Component of the PYK10 complex, at least composed of PYK10/BGLU23, BGLU21, BGLU22, JAL22, JAL23, PBP1/JAL30, PBP2/JAL31, JAL32, JAL33, JAL34, JAL35, GLL22 and GLL23.

Its function is as follows. Sugar-binding protein showing significant affinity for (Glc alpha(1-4)Glc)(3) maltohexaose, (Glc alpha(1-6)Glc)(3) isomaltohexaose, Gal alpha(1-4)Gal beta(1-4)Glc, GalNAc alpha(1-3)(Fuc alpha(1-2)) and Gal beta(1-3)(Fuc alpha(1-4))GlcNAc beta(1-3)Gal beta(1-4)Glc. This chain is Jacalin-related lectin 33 (JAL33), found in Arabidopsis thaliana (Mouse-ear cress).